The sequence spans 118 residues: Protein YoeF (118 aa).

The protein is Protein YoeF (yoeF) of Escherichia coli (strain K12).